A 20-amino-acid chain; its full sequence is Cytochrome c oxidase subunit 6A2, mitochondrial (20 aa).

The interval 1–20 (ASGAKGDHGGAGASTXXLLT) is disordered.

This sequence belongs to the cytochrome c oxidase subunit 6A family. Component of the cytochrome c oxidase (complex IV, CIV), a multisubunit enzyme composed of 14 subunits. The complex is composed of a catalytic core of 3 subunits MT-CO1, MT-CO2 and MT-CO3, encoded in the mitochondrial DNA, and 11 supernumerary subunits COX4I, COX5A, COX5B, COX6A, COX6B, COX6C, COX7A, COX7B, COX7C, COX8 and NDUFA4, which are encoded in the nuclear genome. The complex exists as a monomer or a dimer and forms supercomplexes (SCs) in the inner mitochondrial membrane with NADH-ubiquinone oxidoreductase (complex I, CI) and ubiquinol-cytochrome c oxidoreductase (cytochrome b-c1 complex, complex III, CIII), resulting in different assemblies (supercomplex SCI(1)III(2)IV(1) and megacomplex MCI(2)III(2)IV(2)). As to expression, heart specific isoform.

Its subcellular location is the mitochondrion inner membrane. It participates in energy metabolism; oxidative phosphorylation. In terms of biological role, component of the cytochrome c oxidase, the last enzyme in the mitochondrial electron transport chain which drives oxidative phosphorylation. The respiratory chain contains 3 multisubunit complexes succinate dehydrogenase (complex II, CII), ubiquinol-cytochrome c oxidoreductase (cytochrome b-c1 complex, complex III, CIII) and cytochrome c oxidase (complex IV, CIV), that cooperate to transfer electrons derived from NADH and succinate to molecular oxygen, creating an electrochemical gradient over the inner membrane that drives transmembrane transport and the ATP synthase. Cytochrome c oxidase is the component of the respiratory chain that catalyzes the reduction of oxygen to water. Electrons originating from reduced cytochrome c in the intermembrane space (IMS) are transferred via the dinuclear copper A center (CU(A)) of subunit 2 and heme A of subunit 1 to the active site in subunit 1, a binuclear center (BNC) formed by heme A3 and copper B (CU(B)). The BNC reduces molecular oxygen to 2 water molecules unsing 4 electrons from cytochrome c in the IMS and 4 protons from the mitochondrial matrix. Plays a role in the assembly and stabilization of complex IV. This is Cytochrome c oxidase subunit 6A2, mitochondrial (COX6A2) from Canis lupus familiaris (Dog).